Consider the following 367-residue polypeptide: Pentatricopeptide repeat-containing protein At1g11900 (367 aa).

PPR repeat units lie at residues 69–103, 104–139, 141–175, 176–210, 211–241, 247–281, 282–316, and 317–347; these read SKID…NICL, PISV…GKEP, SSDC…SLPY, RLIV…ECKP, DVIT…MKED, NIIT…GIEP, DLLS…QIRP, and SVYV…LKNT.

The protein belongs to the PPR family. P subfamily.

This Arabidopsis thaliana (Mouse-ear cress) protein is Pentatricopeptide repeat-containing protein At1g11900.